Reading from the N-terminus, the 333-residue chain is Ketol-acid reductoisomerase (NAD(P)(+)) (333 aa).

Residues 2–182 form the KARI N-terminal Rossmann domain; sequence AKIYYDEDAS…GATRAGVIET (181 aa). Residues 25–28, Ser51, and 83–86 each bind NADP(+); these read YGSQ and DTVQ. His108 is an active-site residue. Gly134 provides a ligand contact to NADP(+). The KARI C-terminal knotted domain occupies 183-327; the sequence is TFREETETDL…KELRQMMPWL (145 aa). Mg(2+) contacts are provided by Asp191, Glu195, Glu227, and Glu231. Ser252 contributes to the substrate binding site.

It belongs to the ketol-acid reductoisomerase family. The cofactor is Mg(2+).

The enzyme catalyses (2R)-2,3-dihydroxy-3-methylbutanoate + NAD(+) = (2S)-2-acetolactate + NADH + H(+). It catalyses the reaction (2R)-2,3-dihydroxy-3-methylbutanoate + NADP(+) = (2S)-2-acetolactate + NADPH + H(+). It participates in amino-acid biosynthesis; L-isoleucine biosynthesis; L-isoleucine from 2-oxobutanoate: step 2/4. Its pathway is amino-acid biosynthesis; L-valine biosynthesis; L-valine from pyruvate: step 2/4. Functionally, involved in the biosynthesis of branched-chain amino acids (BCAA). Catalyzes an alkyl-migration followed by a ketol-acid reduction of (S)-2-acetolactate (S2AL) to yield (R)-2,3-dihydroxy-isovalerate. In the isomerase reaction, S2AL is rearranged via a Mg-dependent methyl migration to produce 3-hydroxy-3-methyl-2-ketobutyrate (HMKB). In the reductase reaction, this 2-ketoacid undergoes a metal-dependent reduction by NADPH or NADH to yield (R)-2,3-dihydroxy-isovalerate. The chain is Ketol-acid reductoisomerase (NAD(P)(+)) from Hydrogenobaculum sp. (strain Y04AAS1).